A 924-amino-acid chain; its full sequence is Autophagy-related protein 9B (924 aa).

Positions 1–144 (MVSRMGWGGR…QDSPGLRVGP (144 aa)) are disordered. The Cytoplasmic segment spans residues 1–207 (MVSRMGWGGR…KIYSYHQRNG (207 aa)). The span at 17–27 (WGDLGPGSVPL) shows a compositional bias: low complexity. Over residues 28-40 (LPMPLPPPPPPSC) the composition is skewed to pro residues. Over residues 78–88 (LQGTGASQSCH) the composition is skewed to polar residues. A compositionally biased stretch (low complexity) spans 98–113 (PTQAQPAMTPASASPS). The Tyrosine-based sorting signal motif lies at 151-154 (YERL). A helical transmembrane segment spans residues 208–228 (FACILLEDVFQLGQFIFIVTF). The Lumenal portion of the chain corresponds to 229 to 276 (TTFLLRCVDYNVLFANQPSNHTRPGPFHSKVTLSDAILPSAQCAERIR). Residues 277–297 (SSPLLVLLLVLAAGFWLVQLL) form a helical membrane-spanning segment. At 298–438 (RSVCNLFSYW…GALAARWGRT (141 aa)) the chain is on the cytoplasmic side. The stretch at 439–459 (VLLLAALNLALSPLVLAWQVL) is an intramembrane region. The Cytoplasmic portion of the chain corresponds to 460–526 (HVFYSHVELL…AAPPAPLRTL (67 aa)). A helical transmembrane segment spans residues 527–547 (LARQLVFFAGALFAALLVLTV). Residues 548–551 (YDED) are Lumenal-facing. The helical transmembrane segment at 552-572 (VLAVEHVLTAMTALGVTATVA) threads the bilayer. Residues 573-624 (RSFIPEEQCQGRAPQLLLQTALAHMHYLPEEPGPGGRDRAYRQMAQLLQYRA) lie on the Cytoplasmic side of the membrane. The stretch at 625-645 (VSLLEELLSPLLTPLFLLFWF) is an intramembrane region. Residues 646–924 (RPRALEIIDF…KEPDRASCTD (279 aa)) lie on the Cytoplasmic side of the membrane. The interval 847 to 924 (QQEPWGEAAA…KEPDRASCTD (78 aa)) is disordered. Residues 878-890 (SWSSDGSSPASSP) are compositionally biased toward low complexity. The segment covering 913–924 (TQKEPDRASCTD) has biased composition (basic and acidic residues).

This sequence belongs to the ATG9 family. Homotrimer; forms a homotrimer with a central pore that forms a path between the two membrane leaflets. In terms of tissue distribution, highly expressed in placenta (trophoblast cells) and pituitary gland. Not expressed in vascular endothelial.

It is found in the preautophagosomal structure membrane. The catalysed reaction is a 1,2-diacyl-sn-glycero-3-phosphocholine(in) = a 1,2-diacyl-sn-glycero-3-phosphocholine(out). The enzyme catalyses a 1,2-diacyl-sn-glycero-3-phospho-L-serine(in) = a 1,2-diacyl-sn-glycero-3-phospho-L-serine(out). It catalyses the reaction a 1,2-diacyl-sn-glycero-3-phosphoethanolamine(in) = a 1,2-diacyl-sn-glycero-3-phosphoethanolamine(out). Phospholipid scramblase involved in autophagy by mediating autophagosomal membrane expansion. Cycles between the preautophagosomal structure/phagophore assembly site (PAS) and the cytoplasmic vesicle pool and supplies membrane for the growing autophagosome. Lipid scramblase activity plays a key role in preautophagosomal structure/phagophore assembly by distributing the phospholipids that arrive through ATG2 (ATG2A or ATG2B) from the cytoplasmic to the luminal leaflet of the bilayer, thereby driving autophagosomal membrane expansion. In addition to autophagy, also plays a role in necrotic cell death. The sequence is that of Autophagy-related protein 9B (ATG9B) from Homo sapiens (Human).